The primary structure comprises 847 residues: FAST kinase domain-containing protein 1, mitochondrial (847 aa).

Position 360 is an N6-acetyllysine (lysine 360). One can recognise an RAP domain in the interval isoleucine 777–glutamate 837.

This sequence belongs to the FAST kinase family. In terms of tissue distribution, expression detected in spleen, thymus, testis, ovary, colon, heart, smooth muscle, kidney, brain, lung, liver and white adipose tissue with highest expression in heart.

It localises to the mitochondrion. Involved in the down-regulation of mitochondrial MT-ND3 mRNA levels which leads to decreased respiratory complex I abundance and activity. The chain is FAST kinase domain-containing protein 1, mitochondrial (FASTKD1) from Homo sapiens (Human).